The chain runs to 1001 residues: TonB-dependent receptor P3 (1001 aa).

The N-terminal stretch at 1 to 26 (MTTKNNKQLKSVLFMFLLLIGAYVKA) is a signal peptide. The TonB box signature appears at 109-116 (EEIVVIGY). The 113-residue stretch at 120–232 (KKSDVSGSVS…ANGVIMVTTK (113 aa)) folds into the TBDR plug domain. Residues 238–1001 (KPTLELNTSY…TFTMGLNMKF (764 aa)) enclose the TBDR beta-barrel domain. The TonB C-terminal box signature appears at 984 to 1001 (YGSYPNVRTFTMGLNMKF).

This sequence belongs to the TonB-dependent receptor family.

The protein resides in the cell outer membrane. In terms of biological role, tonB-dependent receptor probably involved in ulvan degradation. Ulvan is the main polysaccharide component of the Ulvales (green seaweed) cell wall. It is composed of disaccharide building blocks comprising 3-sulfated rhamnose (Rha3S) linked to D-glucuronic acid (GlcA), L-iduronic acid (IduA), or D-xylose (Xyl). The TonB-dependent receptor may mediate transport of ulvan oligosaccharides from the surface of the outer membrane to the periplasm for subsequent degradation. The sequence is that of TonB-dependent receptor P3 from Formosa agariphila (strain DSM 15362 / KCTC 12365 / LMG 23005 / KMM 3901 / M-2Alg 35-1).